We begin with the raw amino-acid sequence, 669 residues long: UvrABC system protein C (669 aa).

Positions 14 to 91 (DSPGCYLHKD…IQRYKPKYNI (78 aa)) constitute a GIY-YIG domain. The UVR domain maps to 196 to 231 (KKIVKELEGKMISASDNMEFEQAAEYRDVIKAIGTL). The interval 647-669 (PHKSDENWESIKDNVPLLKSEKS) is disordered. Residues 648–658 (HKSDENWESIK) are compositionally biased toward basic and acidic residues.

It belongs to the UvrC family. In terms of assembly, interacts with UvrB in an incision complex.

It localises to the cytoplasm. Functionally, the UvrABC repair system catalyzes the recognition and processing of DNA lesions. UvrC both incises the 5' and 3' sides of the lesion. The N-terminal half is responsible for the 3' incision and the C-terminal half is responsible for the 5' incision. The polypeptide is UvrABC system protein C (Lactococcus lactis subsp. cremoris (strain MG1363)).